The following is a 278-amino-acid chain: 2-dehydro-3-deoxyphosphooctonate aldolase (278 aa).

The protein belongs to the KdsA family.

The protein localises to the cytoplasm. It catalyses the reaction D-arabinose 5-phosphate + phosphoenolpyruvate + H2O = 3-deoxy-alpha-D-manno-2-octulosonate-8-phosphate + phosphate. The protein operates within carbohydrate biosynthesis; 3-deoxy-D-manno-octulosonate biosynthesis; 3-deoxy-D-manno-octulosonate from D-ribulose 5-phosphate: step 2/3. It participates in bacterial outer membrane biogenesis; lipopolysaccharide biosynthesis. In Bartonella tribocorum (strain CIP 105476 / IBS 506), this protein is 2-dehydro-3-deoxyphosphooctonate aldolase.